A 542-amino-acid polypeptide reads, in one-letter code: Membrane protein insertase YidC (542 aa).

A helical transmembrane segment spans residues 5–25 (TLLAVILSITVFYVFSLLFAP). The tract at residues 33–64 (ESTGQAVSAPVSAGQPVAGGVQPSASAPSLPA) is disordered. Residues 54 to 64 (QPSASAPSLPA) show a composition bias toward low complexity. The next 5 helical transmembrane spans lie at 323–343 (LDLG…KYFY), 345–365 (YVGN…ALFF), 419–439 (LPML…MFSI), 463–483 (MLGL…TMFI), and 500–520 (MLAL…GLVL).

Belongs to the OXA1/ALB3/YidC family. Type 1 subfamily. In terms of assembly, interacts with the Sec translocase complex via SecD. Specifically interacts with transmembrane segments of nascent integral membrane proteins during membrane integration.

It localises to the cell inner membrane. In terms of biological role, required for the insertion and/or proper folding and/or complex formation of integral membrane proteins into the membrane. Involved in integration of membrane proteins that insert both dependently and independently of the Sec translocase complex, as well as at least some lipoproteins. Aids folding of multispanning membrane proteins. The polypeptide is Membrane protein insertase YidC (Pelobacter propionicus (strain DSM 2379 / NBRC 103807 / OttBd1)).